A 180-amino-acid polypeptide reads, in one-letter code: Small ribosomal subunit protein uS5 (180 aa).

The disordered stretch occupies residues 1–26; sequence MAEEKDKKQSSRRRNNRRTEKESEWQ. The segment covering 17–26 has biased composition (basic and acidic residues); that stretch reads RRTEKESEWQ. The region spanning 25-88 is the S5 DRBM domain; the sequence is WQERVVQIRR…ADGKKHLVNV (64 aa).

Belongs to the universal ribosomal protein uS5 family. In terms of assembly, part of the 30S ribosomal subunit. Contacts proteins S4 and S8.

In terms of biological role, with S4 and S12 plays an important role in translational accuracy. Its function is as follows. Located at the back of the 30S subunit body where it stabilizes the conformation of the head with respect to the body. The polypeptide is Small ribosomal subunit protein uS5 (Synechococcus elongatus (strain ATCC 33912 / PCC 7942 / FACHB-805) (Anacystis nidulans R2)).